The chain runs to 421 residues: Proton/sodium-glutamate symport protein (421 aa).

The Cytoplasmic portion of the chain corresponds to 1 to 3 (MRK). A helical transmembrane segment spans residues 4–24 (IGLAWQIFIGLILGIIVGAIF). Residues 25-43 (YGNPKVATYLQPIGDIFLR) are Extracellular-facing. The chain crosses the membrane as a helical span at residues 44–64 (LIKMIVIPIVISSLVVGVASV). Over 65–77 (GDLKKLGKLGGKT) the chain is Cytoplasmic. Residues 78–98 (IIYFEIITTIAIVVGLLAANI) traverse the membrane as a helical segment. Over 99-148 (FQPGTGVNMKSLEKTDIQSYVDTTNEVQHHSMVETFVNIVPKNIFESLTK) the chain is Extracellular. A helical membrane pass occupies residues 149–169 (GDMLPIIFFSVMFGLGVAAIG). Over 170-198 (EKGKPVLQFFQGTAEAMFYVTNQIMKFAP) the chain is Cytoplasmic. A helical transmembrane segment spans residues 199 to 219 (FGVFALIGVTVSKFGVESLIP). The Extracellular portion of the chain corresponds to 220-222 (LSK). A helical membrane pass occupies residues 223-243 (LVIVVYATMVFFIFVVLGGVA). Position 244 (Lys-244) is a topological domain, cytoplasmic. Residues 245 to 265 (LFGINIFHIIKILKDELILAY) form a helical membrane-spanning segment. The Extracellular segment spans residues 266–306 (STASSETVLPKIMEKMENFGCPKAITSFVIPTGYSFNLDGS). A helical transmembrane segment spans residues 307 to 327 (TLYQALAAIFIAQLYGIDMPI). At 328–330 (SQQ) the chain is on the cytoplasmic side. 2 helical membrane-spanning segments follow: residues 331-351 (ISLL…PGVS) and 352-372 (FVVL…LAFI). Residues 373 to 421 (AGIDRILDMARTAVNVIGNSLAAIIMSKWEGQYNEEKGKQYIAQLQQSA) lie on the Cytoplasmic side of the membrane.

It belongs to the dicarboxylate/amino acid:cation symporter (DAACS) (TC 2.A.23) family. In terms of assembly, homotrimer.

It is found in the cell membrane. This carrier protein is part of the Na(+)-dependent, binding-protein-independent glutamate-aspartate transport system. The polypeptide is Proton/sodium-glutamate symport protein (gltT) (Geobacillus stearothermophilus (Bacillus stearothermophilus)).